The sequence spans 516 residues: Putative GTP-binding protein 6 (516 aa).

The segment covering 18 to 39 (GRGRSAPRAAAPSCPARALAAV) has biased composition (low complexity). The segment at 18–82 (GRGRSAPRAA…PEDADENAEE (65 aa)) is disordered. Residues 57-67 (LRADGGRSRTG) show a composition bias toward basic and acidic residues. The segment covering 68–82 (DDEEEPEDADENAEE) has biased composition (acidic residues). The region spanning 295 to 459 (PVISVVGYTN…ELDAAVLKAT (165 aa)) is the Hflx-type G domain. GTP is bound by residues 301–308 (GYTNCGKT), 327–331 (FATLD), 349–352 (DTIG), 418–421 (NKVD), and 437–439 (SAL). The Mg(2+) site is built by Thr-308 and Thr-329.

Belongs to the TRAFAC class OBG-HflX-like GTPase superfamily. HflX GTPase family. Requires Mg(2+) as cofactor. In terms of tissue distribution, ubiquitously expressed.

This Homo sapiens (Human) protein is Putative GTP-binding protein 6 (GTPBP6).